Consider the following 588-residue polypeptide: Methylcrotonoyl-CoA carboxylase beta chain, mitochondrial (588 aa).

The CoA carboxyltransferase N-terminal domain maps to 72 to 329 (MNSTLKQLKE…KKQPSPVITE (258 aa)). The segment at 72–570 (MNSTLKQLKE…RKVIALSLSA (499 aa)) is carboxyltransferase. The 242-residue stretch at 329-570 (ETEEPLYPTS…RKVIALSLSA (242 aa)) folds into the CoA carboxyltransferase C-terminal domain. The acyl-CoA binding stretch occupies residues 366–395 (RFDEFKELYGTTLICGFARVHGMPVGIIAN).

It belongs to the AccD/PCCB family. In terms of assembly, probably a dodecamer composed of six biotin-containing alpha subunits and six beta subunits.

Its subcellular location is the mitochondrion matrix. It catalyses the reaction 3-methylbut-2-enoyl-CoA + hydrogencarbonate + ATP = 3-methyl-(2E)-glutaconyl-CoA + ADP + phosphate + H(+). Its pathway is amino-acid degradation; L-leucine degradation; (S)-3-hydroxy-3-methylglutaryl-CoA from 3-isovaleryl-CoA: step 2/3. In terms of biological role, carboxyltransferase subunit of the 3-methylcrotonyl-CoA carboxylase, an enzyme that catalyzes the conversion of 3-methylcrotonyl-CoA to 3-methylglutaconyl-CoA, a critical step for leucine and isovaleric acid catabolism. The chain is Methylcrotonoyl-CoA carboxylase beta chain, mitochondrial (mccb) from Dictyostelium discoideum (Social amoeba).